The following is a 134-amino-acid chain: D-xylulose reductase (134 aa).

The tract at residues 31–115 (PATTTXYKXQ…XXQXDKIGRY (85 aa)) is disordered. Over residues 50–59 (QTHEGTHQDV) the composition is skewed to basic and acidic residues.

This sequence belongs to the zinc-containing alcohol dehydrogenase family.

It catalyses the reaction xylitol + NAD(+) = D-xylulose + NADH + H(+). Activated by calcium and inhibited by zinc. This chain is D-xylulose reductase, found in Sus scrofa (Pig).